The chain runs to 244 residues: Large ribosomal subunit protein bL25 (244 aa).

Residues 197–244 (ADVEAEAAEAALAKEAATEAAEEEETEKPASEAEASGEAEQADTDKKE) form a disordered region. Positions 204 to 215 (AEAALAKEAATE) are enriched in low complexity.

It belongs to the bacterial ribosomal protein bL25 family. CTC subfamily. In terms of assembly, part of the 50S ribosomal subunit; part of the 5S rRNA/L5/L18/L25 subcomplex. Contacts the 5S rRNA. Binds to the 5S rRNA independently of L5 and L18.

In terms of biological role, this is one of the proteins that binds to the 5S RNA in the ribosome where it forms part of the central protuberance. The chain is Large ribosomal subunit protein bL25 from Coxiella burnetii (strain CbuK_Q154) (Coxiella burnetii (strain Q154)).